Here is a 171-residue protein sequence, read N- to C-terminus: S-ribosylhomocysteine lyase (171 aa).

Residues H54, H58, and C128 each coordinate Fe cation.

Belongs to the LuxS family. As to quaternary structure, homodimer. Fe cation is required as a cofactor.

It catalyses the reaction S-(5-deoxy-D-ribos-5-yl)-L-homocysteine = (S)-4,5-dihydroxypentane-2,3-dione + L-homocysteine. Involved in the synthesis of autoinducer 2 (AI-2) which is secreted by bacteria and is used to communicate both the cell density and the metabolic potential of the environment. The regulation of gene expression in response to changes in cell density is called quorum sensing. Catalyzes the transformation of S-ribosylhomocysteine (RHC) to homocysteine (HC) and 4,5-dihydroxy-2,3-pentadione (DPD). The protein is S-ribosylhomocysteine lyase of Photorhabdus laumondii subsp. laumondii (strain DSM 15139 / CIP 105565 / TT01) (Photorhabdus luminescens subsp. laumondii).